A 67-amino-acid polypeptide reads, in one-letter code: Kappa-conotoxin-like Em11.8 (67 aa).

The signal sequence occupies residues 1 to 26; that stretch reads MMFRLTSVSCFLLVIACLNLFQVVLT. 4 cysteine pairs are disulfide-bonded: cysteine 29–cysteine 43, cysteine 36–cysteine 48, cysteine 42–cysteine 51, and cysteine 47–cysteine 55. Phenylalanine 59 carries the phenylalanine amide modification. Positions 63–67 are excised as a propeptide; sequence ATFQE.

Belongs to the conotoxin I2 superfamily. In terms of tissue distribution, expressed by the venom duct.

The protein resides in the secreted. In terms of biological role, inhibits the vertebrate voltage-gated potassium channels Kv1.1/KCNA1 and Kv1.3/KCNA3. The chain is Kappa-conotoxin-like Em11.8 from Conus emaciatus (False virgin cone).